We begin with the raw amino-acid sequence, 423 residues long: UDP-N-acetylglucosamine 1-carboxyvinyltransferase 1 (423 aa).

Residue 23–24 (KN) participates in phosphoenolpyruvate binding. Position 96 (R96) interacts with UDP-N-acetyl-alpha-D-glucosamine. C120 serves as the catalytic Proton donor. Position 120 is a 2-(S-cysteinyl)pyruvic acid O-phosphothioketal (C120). UDP-N-acetyl-alpha-D-glucosamine-binding positions include 125–129 (RPIDL), D309, and V331.

It belongs to the EPSP synthase family. MurA subfamily.

It is found in the cytoplasm. The catalysed reaction is phosphoenolpyruvate + UDP-N-acetyl-alpha-D-glucosamine = UDP-N-acetyl-3-O-(1-carboxyvinyl)-alpha-D-glucosamine + phosphate. It functions in the pathway cell wall biogenesis; peptidoglycan biosynthesis. Functionally, cell wall formation. Adds enolpyruvyl to UDP-N-acetylglucosamine. The polypeptide is UDP-N-acetylglucosamine 1-carboxyvinyltransferase 1 (Streptococcus thermophilus (strain CNRZ 1066)).